The sequence spans 364 residues: Histidinol-phosphate aminotransferase (364 aa).

The segment at 1–46 is disordered; that stretch reads MQPRDLSDHSPYVPGRGVEEVARDRGLDPDDLIKLSSNENPHGPSP. Residues 17-33 are compositionally biased toward basic and acidic residues; the sequence is GVEEVARDRGLDPDDLI. N6-(pyridoxal phosphate)lysine is present on Lys222.

Belongs to the class-II pyridoxal-phosphate-dependent aminotransferase family. Histidinol-phosphate aminotransferase subfamily. Requires pyridoxal 5'-phosphate as cofactor.

It carries out the reaction L-histidinol phosphate + 2-oxoglutarate = 3-(imidazol-4-yl)-2-oxopropyl phosphate + L-glutamate. It functions in the pathway amino-acid biosynthesis; L-histidine biosynthesis; L-histidine from 5-phospho-alpha-D-ribose 1-diphosphate: step 7/9. In Halorubrum lacusprofundi (strain ATCC 49239 / DSM 5036 / JCM 8891 / ACAM 34), this protein is Histidinol-phosphate aminotransferase.